Consider the following 81-residue polypeptide: Adipogenin (81 aa).

A helical membrane pass occupies residues 16–36 (FLVFWLCLPVALLLFLLIIWL).

Belongs to the adipogenin family. In terms of tissue distribution, highly expressed in subcutaneous, perirenal and mesecentric adipose tissue.

It localises to the membrane. The protein localises to the nucleus. Plays a role in stimulating adipocyte differentiation and development. The protein is Adipogenin of Bos taurus (Bovine).